The primary structure comprises 217 residues: MRIVLVGPPGAGKGTQATRLAETLHIPHISTGDLFRANISQQTELGKLAKSYMNAGNLVPDEVTIAMAKDRMEQPDAEGGFLLDGFPRNVSQAEALDELLETEGMKLDAVLDLEAPEDEVVKRIAGRRVCRNEPKHVFHVTYTPPKKEGVCDVCGGELYQRDDDSEETVRKRLEVYHTQTEPIIDYYKSQGLVATIAATGPVDEVTRRALEALKRDQ.

Residue 10 to 15 (GAGKGT) coordinates ATP. The interval 30-59 (STGDLFRANISQQTELGKLAKSYMNAGNLV) is NMP. Residues threonine 31, arginine 36, 57–59 (NLV), 85–88 (GFPR), and glutamine 92 contribute to the AMP site. An LID region spans residues 126-164 (GRRVCRNEPKHVFHVTYTPPKKEGVCDVCGGELYQRDDD). Residues arginine 127 and 137–138 (VF) each bind ATP. Residues arginine 161 and arginine 172 each contribute to the AMP site. Glycine 200 is an ATP binding site.

The protein belongs to the adenylate kinase family. Monomer.

It is found in the cytoplasm. The catalysed reaction is AMP + ATP = 2 ADP. The protein operates within purine metabolism; AMP biosynthesis via salvage pathway; AMP from ADP: step 1/1. Its function is as follows. Catalyzes the reversible transfer of the terminal phosphate group between ATP and AMP. Plays an important role in cellular energy homeostasis and in adenine nucleotide metabolism. This chain is Adenylate kinase, found in Streptomyces coelicolor (strain ATCC BAA-471 / A3(2) / M145).